Here is a 272-residue protein sequence, read N- to C-terminus: Bis(5'-nucleosyl)-tetraphosphatase, symmetrical (272 aa).

It belongs to the Ap4A hydrolase family.

It carries out the reaction P(1),P(4)-bis(5'-adenosyl) tetraphosphate + H2O = 2 ADP + 2 H(+). Functionally, hydrolyzes diadenosine 5',5'''-P1,P4-tetraphosphate to yield ADP. This chain is Bis(5'-nucleosyl)-tetraphosphatase, symmetrical, found in Shewanella frigidimarina (strain NCIMB 400).